The sequence spans 495 residues: MADRNLRDLLAPWVPDAPSRALREMTLDSRVAAAGDLFVAVVGHQADGRRYIPQAIAQGVAAIIAEAKGEATDGEIREMHGVPVIYLSQLNERLSALAGRFYHEPSDNLRLVGVTGTNGKTTTTQLLAQWSQLLGETSAVMGTVGNGLLGKVIPTENTTGSAVDVQHELAGLVDQDATFCAMEVSSHGLVQHRVAALKFAASVFTNLSRDHLDYHGDMEHYEAAKWLLYSEHHCGQAIINADDEVGRRWLAKLPDAVAVSMEDHINPNCHGRWLKATEVNYHDSGATIRFSSSWGDGEIESHLMGAFNVSNLLLALATLLALGYPLADLLKTAARLQPVCGRMEVFTAPGKPTVVVDYAHTPDALEKALQAARLHCAGKLWCVFGCGGDRDKGKRPLMGAIAEEFADVAVVTDDNPRTEEPRAIINDILAGMLDAGHAKVMEDRAEAVTCAVMQAKENDVVLVAGKGHEDYQIVGNQRLDYSDRVTVARLLGVIA.

Residues L27, S29, and 44–46 (HQA) each bind UDP-N-acetyl-alpha-D-muramoyl-L-alanyl-D-glutamate. 116–122 (GTNGKTT) contributes to the ATP binding site. Residues N157, 158–159 (TT), S185, Q191, and R193 contribute to the UDP-N-acetyl-alpha-D-muramoyl-L-alanyl-D-glutamate site. At K225 the chain carries N6-carboxylysine. Meso-2,6-diaminopimelate-binding positions include R390, 414 to 417 (DNPR), G465, and E469. Residues 414–417 (DNPR) carry the Meso-diaminopimelate recognition motif motif.

The protein belongs to the MurCDEF family. MurE subfamily. The cofactor is Mg(2+). Post-translationally, carboxylation is probably crucial for Mg(2+) binding and, consequently, for the gamma-phosphate positioning of ATP.

Its subcellular location is the cytoplasm. The enzyme catalyses UDP-N-acetyl-alpha-D-muramoyl-L-alanyl-D-glutamate + meso-2,6-diaminopimelate + ATP = UDP-N-acetyl-alpha-D-muramoyl-L-alanyl-gamma-D-glutamyl-meso-2,6-diaminopimelate + ADP + phosphate + H(+). It participates in cell wall biogenesis; peptidoglycan biosynthesis. Catalyzes the addition of meso-diaminopimelic acid to the nucleotide precursor UDP-N-acetylmuramoyl-L-alanyl-D-glutamate (UMAG) in the biosynthesis of bacterial cell-wall peptidoglycan. In Escherichia coli O157:H7, this protein is UDP-N-acetylmuramoyl-L-alanyl-D-glutamate--2,6-diaminopimelate ligase.